The following is a 450-amino-acid chain: UDP-N-acetylmuramoylalanine--D-glutamate ligase (450 aa).

111–117 (GTNGKST) is an ATP binding site.

The protein belongs to the MurCDEF family.

The protein resides in the cytoplasm. It carries out the reaction UDP-N-acetyl-alpha-D-muramoyl-L-alanine + D-glutamate + ATP = UDP-N-acetyl-alpha-D-muramoyl-L-alanyl-D-glutamate + ADP + phosphate + H(+). It participates in cell wall biogenesis; peptidoglycan biosynthesis. Its function is as follows. Cell wall formation. Catalyzes the addition of glutamate to the nucleotide precursor UDP-N-acetylmuramoyl-L-alanine (UMA). The chain is UDP-N-acetylmuramoylalanine--D-glutamate ligase from Rickettsia bellii (strain RML369-C).